Here is a 584-residue protein sequence, read N- to C-terminus: Leucine-rich repeat and fibronectin type III domain-containing protein 1 (584 aa).

An N-terminal signal peptide occupies residues 1-17 (MERLVFCVLVFGALAKA). The 34-residue stretch at 18 to 51 (QLCPGRCICQTISPTLTLLCAKTGLLFVPPTVDR) folds into the LRRNT domain. The Extracellular portion of the chain corresponds to 18–494 (QLCPGRCICQ…VPSQFLGGTM (477 aa)). 7 LRR repeats span residues 52 to 73 (KTVE…DFLN), 76 to 97 (SLVH…AFMG), 100 to 121 (SLRA…QLKG), 124 to 145 (NLRH…SFDE), 149 to 170 (TIED…AIAR), 173 to 194 (NINT…TFTL), and 197 to 218 (KLVR…TLFQ). A glycan (N-linked (GlcNAc...) asparagine) is linked at Asn-73. The region spanning 241-287 (NPLHCNCELLWLRRLTREDDLETCASPEHLMDKYFWSIQEEEFICEP) is the LRRCT domain. An Ig-like domain is found at 288 to 375 (PLITKHQVTK…GIATAAVHVH (88 aa)). Residues Cys-310 and Cys-359 are joined by a disulfide bond. N-linked (GlcNAc...) asparagine glycans are attached at residues Asn-332, Asn-341, Asn-384, Asn-408, and Asn-421. Residues 393–414 (DPGLSDISTSSRSSSNDSKTHS) are disordered. The segment covering 397–409 (SDISTSSRSSSND) has biased composition (low complexity). The helical transmembrane segment at 495–515 (IIIIGGIIVASVLVFIIILMI) threads the bilayer. Residues 516-584 (RYKAYSGGGG…MVLPILHLLF (69 aa)) lie on the Cytoplasmic side of the membrane. The tract at residues 539–564 (HVHSQTNGSRSAATKQSEEPPESPAG) is disordered. The segment covering 540–553 (VHSQTNGSRSAATK) has biased composition (polar residues).

Belongs to the LRFN family.

The protein localises to the membrane. Its subcellular location is the synapse. Functionally, involved in the regulation of excitatory synapses. This chain is Leucine-rich repeat and fibronectin type III domain-containing protein 1 (lrfn1), found in Danio rerio (Zebrafish).